The chain runs to 4095 residues: Protein adenylyltransferase and cysteine protease IbpA (4095 aa).

An N-terminal signal peptide occupies residues 1-97 (MNKNCYKLIF…MVAAPNFAQS (97 aa)). Binds bovine IgG2 Fc stretches follow at residues 972 to 1515 (SERI…FVKA) and 1116 to 1255 (SEVQ…FLKE). 5 disordered regions span residues 1082-1117 (EVSD…LPSE), 1130-1154 (KEKA…LQSD), 1204-1223 (QEAL…AKAK), 1625-1652 (TVSH…TGFT), and 1705-1732 (EEDE…QKEE). Residues 1087–1096 (WERDPDEPDE) show a composition bias toward acidic residues. 2 stretches are compositionally biased toward basic and acidic residues: residues 1097 to 1117 (PDYK…LPSE) and 1130 to 1139 (KEKAQQKRQA). A coiled-coil region spans residues 1116 to 1247 (SEVQDKLRQK…AKDHQIEEAL (132 aa)). Residues 1716–1727 (KAKAAPDATDNA) show a composition bias toward low complexity. 12 consecutive repeat copies span residues 2250 to 2271 (YSTL…SDDI), 2272 to 2295 (YSLL…AEGA), 2296 to 2317 (YDLL…SDDL), 2318 to 2343 (YSTV…AAGP), 2344 to 2365 (YSLL…GEGP), 2366 to 2387 (YSLL…SNST), 2388 to 2413 (YSTV…VAGP), 2414 to 2435 (YSLL…GEGP), 2436 to 2457 (YSLL…SDSP), 2458 to 2483 (YSTV…VAGP), 2484 to 2505 (YSLL…GEGP), and 2506 to 2527 (YSLL…SDSP). A 12 X 22 AA approximate repeats region spans residues 2250-2527 (YSTLGDQNAN…RTLGGESDSP (278 aa)). Composition is skewed to polar residues over residues 2592 to 2611 (SDTE…TRNA) and 2794 to 2803 (TAPQKTSPVK). Disordered stretches follow at residues 2592-2617 (SDTE…PLPP), 2765-2809 (TIGE…SAEG), 2825-2894 (AKGQ…SPKR), 2914-2933 (LKSK…EPIY), 2943-3033 (LARA…KSED), and 3049-3069 (NKSQ…PNYD). A compositionally biased stretch (low complexity) spans 2880–2889 (PFPSEFSSEP). Polar residues-rich tracts occupy residues 2977 to 2996 (SNLS…QSVA) and 3005 to 3018 (AESN…QKLQ). Basic and acidic residues predominate over residues 3052–3062 (QAKEAKSEQET). The 138-residue stretch at 3218–3355 (LTVEMIEKLN…AEVVKEFLTE (138 aa)) folds into the Fido 1 domain. A yopT-like region spans residues 3222–4095 (MIEKLNHGLR…FNVVNYKKNN (874 aa)). A binds bovine IgG2 Fc region spans residues 3354–3698 (TELGKKSSPQ…VDFINRAKNE (345 aa)). Disordered regions lie at residues 3357–3415 (GKKS…PSVP) and 3432–3454 (AELK…ATGV). Polar residues-rich tracts occupy residues 3360–3379 (SSPQ…SPVT) and 3388–3401 (VENT…TIKQ). Residues 3443-3454 (KAAEKSEGATGV) show a composition bias toward basic and acidic residues. Positions 3535–3557 (IPEATVKQMSHLPEFDDILTEGA) are arm region. Residues 3640 to 3777 (LTVQMIENLN…SEVVVEFLKE (138 aa)) form the Fido 2 domain. ATP contacts are provided by residues 3670-3671 (KE), 3722-3724 (GNG), Arg3728, and Gln3757. The span at 3783–3798 (SKEDNEQNLEKTDRTS) shows a compositional bias: basic and acidic residues. The segment at 3783–3829 (SKEDNEQNLEKTDRTSTDLTESAVENSAALSSGTVRSATVSETVTET) is disordered. Residues 3799–3815 (TDLTESAVENSAALSSG) show a composition bias toward polar residues. Positions 3816 to 3829 (TVRSATVSETVTET) are enriched in low complexity. Active-site for cysteine protease activity residues include Cys3910, His4033, and Asp4048.

In the central section; belongs to the fic family. It in the C-terminal section; belongs to the peptidase C58 family. As to quaternary structure, immunoglobulin-binding protein. The long form of the protein is probably processed, and/or the transcript may be subject to differential translational initiation.

The protein localises to the secreted. The protein resides in the cell outer membrane. It carries out the reaction L-tyrosyl-[protein] + ATP = O-(5'-adenylyl)-L-tyrosyl-[protein] + diphosphate. The enzyme catalyses L-threonyl-[protein] + ATP = 3-O-(5'-adenylyl)-L-threonyl-[protein] + diphosphate. Functionally, adenylyltransferase involved in virulence by mediating the addition of adenosine 5'-monophosphate (AMP) to specific tyrosine residue of host Rho GTPases RhoA, Rac and Cdc42. The resulting AMPylation inactivates Rho GTPases, thereby inhibiting actin assembly in infected cells. Probably also acts as a cysteine protease, which may play a central role after invasion of host cell and in virulence. Possible member (with IbpB) of a 2 partner secretion. Probably able to bind bovine epithelial cells (host cells). May participate in the formation of fibrils at the surface of the bacteria. This is Protein adenylyltransferase and cysteine protease IbpA (ibpA) from Histophilus somni (strain 2336) (Haemophilus somnus).